The chain runs to 63 residues: Beta-defensin 38 (63 aa).

An N-terminal signal peptide occupies residues 1-21; it reads MKISCFLLLILSLYFFQINQA. Disulfide bonds link C29/C58, C36/C51, and C41/C59.

The protein belongs to the beta-defensin family. Only expressed in epididymis (caput, corpus and cauda).

It localises to the secreted. Its function is as follows. Synthetic Defb38 kills both Gram-negative (E.coli and P.aeruginosa) and Gram-positive (E.faecium) bacteria. In Mus musculus (Mouse), this protein is Beta-defensin 38 (Defb38).